A 556-amino-acid chain; its full sequence is Hydroxylamine reductase (556 aa).

Positions 4, 7, 19, and 26 each coordinate [4Fe-4S] cluster. Hybrid [4Fe-2O-2S] cluster-binding residues include histidine 252, glutamate 276, cysteine 320, cysteine 407, cysteine 435, cysteine 460, glutamate 494, and lysine 496. Cysteine 407 is modified (cysteine persulfide).

This sequence belongs to the HCP family. Requires [4Fe-4S] cluster as cofactor. Hybrid [4Fe-2O-2S] cluster serves as cofactor.

It localises to the cytoplasm. It catalyses the reaction A + NH4(+) + H2O = hydroxylamine + AH2 + H(+). Functionally, catalyzes the reduction of hydroxylamine to form NH(3) and H(2)O. The sequence is that of Hydroxylamine reductase from Acidithiobacillus ferridurans.